A 224-amino-acid polypeptide reads, in one-letter code: Cytidylate kinase (224 aa).

11–19 contacts ATP; sequence GPAAAGKST.

The protein belongs to the cytidylate kinase family. Type 1 subfamily.

It is found in the cytoplasm. It catalyses the reaction CMP + ATP = CDP + ADP. The catalysed reaction is dCMP + ATP = dCDP + ADP. The chain is Cytidylate kinase from Geobacillus sp. (strain WCH70).